Consider the following 467-residue polypeptide: MRLPREIGPIHFVGIGGIGMSGIAEVLVNLGYAVQGSDASDNYNLDRLRKKGAKVSVGHKAENVDGAEVVVVSTAIKRDNPELMAARERRIPVVRRAEMLAELMRLKSCVAIAGTHGKTTTTTMVATLLDAGGLDPTVINGGIINAYGSNARLGAGDWMVVEADESDGTFLKLPTDVAIVTNVDPEHLDHFKTFEAVQDAFRHFVENLPFYGFAVMCIDHPVVQSLVGKIEDRRIITYGENPQADVRLVDLTPMGGGSKFKVAFRDRKTGAVHEIPDLMLPMPGRHNASNATAAIAVARELGVSDEAIRSAIAGFGGVKRRFTKTGEWNGVTVIDDYGHHPVEIAAVLKAARESTNGKIVAVVQPHRYTRLQSLFEEFCTCFNDADAVIVADVYAAGEAPIDGIDRDHFVAGLRAHGHREVVPLPAAPELAGIVKGLAKSGDLVVCLGAGNITQWAYALPGELNALG.

114–120 (GTHGKTT) is a binding site for ATP.

Belongs to the MurCDEF family.

The protein localises to the cytoplasm. It carries out the reaction UDP-N-acetyl-alpha-D-muramate + L-alanine + ATP = UDP-N-acetyl-alpha-D-muramoyl-L-alanine + ADP + phosphate + H(+). Its pathway is cell wall biogenesis; peptidoglycan biosynthesis. In terms of biological role, cell wall formation. This Bradyrhizobium diazoefficiens (strain JCM 10833 / BCRC 13528 / IAM 13628 / NBRC 14792 / USDA 110) protein is UDP-N-acetylmuramate--L-alanine ligase.